The primary structure comprises 412 residues: MPLFLYMVLLVLGIHCVQPNISEGKVTSCLSPQQNATLHKMSSINADFAFNLYRRFAVETPDQNIFFSPVSISAALAMLSFGACSSTQTQILESLGYNLTEMPMAEIQQGFQHLICSLNFPKKELELQMGNALFIEKQLKPLAKFLDDVKNLYETEVFSTDFSNVSAAQQELNSHVERQTKGKIVGLIPDLKPNTIMVLVNYICFKAQWANPFDPSKTEEGSSFLVDKTTTVQVPMMHQMEQYYHLVDTELNCTVLQMDYSKNALALFVLPNEGQMEWVEGAMSSKILKKWNRLLQKGWIDLFVPKFSMSATYDLGDILLKMGIQDAFADNADFSGLTKDNGLKLSNAAHKAVLNIGEKGTEAIPEVTFLNQPKITLLHPIIQFDRSFLLLILEKSTRSILFLGKVVDPTEA.

A signal peptide spans 1–16; the sequence is MPLFLYMVLLVLGIHC. N-linked (GlcNAc...) asparagine glycosylation is found at asparagine 20, asparagine 35, asparagine 98, asparagine 164, and asparagine 252. 2 residues coordinate thyroxine: asparagine 292 and lysine 395.

The protein belongs to the serpin family. In terms of tissue distribution, expressed by the liver and secreted in plasma.

The protein localises to the secreted. Functionally, major thyroid hormone transport protein in serum. This is Thyroxine-binding globulin (SERPINA7) from Sus scrofa (Pig).